The chain runs to 1173 residues: Rac guanine nucleotide exchange factor JJ (1173 aa).

Disordered regions lie at residues Met1–Gln380, Lys458–Met479, and Asp712–Gln765. Low complexity-rich tracts occupy residues Gln8 to Gln23 and Gln35 to Pro45. Over residues Thr50–Gly62 the composition is skewed to polar residues. Low complexity-rich tracts occupy residues Thr72–Gln82 and Gln98–Tyr118. Positions Ser119–Tyr133 are enriched in polar residues. Low complexity-rich tracts occupy residues Thr134–Thr143, Ser153–Asn191, and Ser208–Ser219. Over residues Tyr220–Gln239 the composition is skewed to polar residues. A compositionally biased stretch (low complexity) spans Pro240 to Thr258. The segment covering Ser262–Ile277 has biased composition (basic and acidic residues). The segment covering Thr280 to Asn295 has biased composition (polar residues). Residues Gln296–Gln380 are compositionally biased toward low complexity. A compositionally biased stretch (basic and acidic residues) spans Lys470–Met479. Low complexity predominate over residues Gln743–Gln765. The region spanning Arg793–Leu822 is the IQ domain. One can recognise a DH domain in the interval Asn833–Arg1016. One can recognise a PH domain in the interval Arg1044–Lys1146.

GTPase-activating protein. The chain is Rac guanine nucleotide exchange factor JJ (gxcJJ) from Dictyostelium discoideum (Social amoeba).